The chain runs to 504 residues: Maturase K (504 aa).

Belongs to the intron maturase 2 family. MatK subfamily.

It is found in the plastid. The protein resides in the chloroplast. Functionally, usually encoded in the trnK tRNA gene intron. Probably assists in splicing its own and other chloroplast group II introns. In Betula papyrifera (Paper birch), this protein is Maturase K.